We begin with the raw amino-acid sequence, 303 residues long: MYYGFDIGGTKIALGVFDSGRQLQWEKRVPTPRDSYDAFLDAVCELVAEADRRFGCKGSVGIGIPGMPETEDGTLYAANVPAASGKPLRADLSARLDRDVRLDNDANCFALSEAWDDEFTQYPLVMGLILGTGVGGGLIFNGRPITGKSYITGEFGHMRLPVDALTMMGLDFPLRRCGCGQYGCIENYLSGRGFAWLYQHYYHQPLQAPEIIALYDQGDEQARAHVERYLDLLAVCLGNILTIVDPDLVVIGGGLSNFPAITTQLAERLPRHLLPVARVPRIERARHGDAGGMRGAAFLHLTD.

ATP-binding positions include Gly-4–Lys-11 and Gly-133–Phe-140. His-157, Cys-177, Cys-179, and Cys-184 together coordinate Zn(2+).

It belongs to the ROK (NagC/XylR) family. NagK subfamily.

The catalysed reaction is N-acetyl-D-glucosamine + ATP = N-acetyl-D-glucosamine 6-phosphate + ADP + H(+). It functions in the pathway cell wall biogenesis; peptidoglycan recycling. Functionally, catalyzes the phosphorylation of N-acetyl-D-glucosamine (GlcNAc) derived from cell-wall degradation, yielding GlcNAc-6-P. This chain is N-acetyl-D-glucosamine kinase, found in Escherichia coli O6:H1 (strain CFT073 / ATCC 700928 / UPEC).